The primary structure comprises 88 residues: Small ribosomal subunit protein bS20 (88 aa).

2 disordered regions span residues 1-25 (MPNIKSQIKRVKTNEKSRQRNKAVK) and 68-88 (HKNQAANRKSAISKKLNSLAA).

This sequence belongs to the bacterial ribosomal protein bS20 family.

In terms of biological role, binds directly to 16S ribosomal RNA. This is Small ribosomal subunit protein bS20 from Cutibacterium acnes (strain DSM 16379 / KPA171202) (Propionibacterium acnes).